Reading from the N-terminus, the 206-residue chain is Large ribosomal subunit protein uL3 (206 aa).

A disordered region spans residues 127 to 151; the sequence is SGGPSSHGSKFHRHLGGTGQATTPA.

The protein belongs to the universal ribosomal protein uL3 family. Part of the 50S ribosomal subunit. Forms a cluster with proteins L14 and L19.

Functionally, one of the primary rRNA binding proteins, it binds directly near the 3'-end of the 23S rRNA, where it nucleates assembly of the 50S subunit. The polypeptide is Large ribosomal subunit protein uL3 (Borreliella burgdorferi (strain ZS7) (Borrelia burgdorferi)).